The following is a 512-amino-acid chain: ATP synthase subunit alpha (512 aa).

ATP is bound at residue 169–176 (GDRQTGKT).

The protein belongs to the ATPase alpha/beta chains family. F-type ATPases have 2 components, CF(1) - the catalytic core - and CF(0) - the membrane proton channel. CF(1) has five subunits: alpha(3), beta(3), gamma(1), delta(1), epsilon(1). CF(0) has three main subunits: a(1), b(2) and c(9-12). The alpha and beta chains form an alternating ring which encloses part of the gamma chain. CF(1) is attached to CF(0) by a central stalk formed by the gamma and epsilon chains, while a peripheral stalk is formed by the delta and b chains.

It localises to the cell inner membrane. It catalyses the reaction ATP + H2O + 4 H(+)(in) = ADP + phosphate + 5 H(+)(out). Produces ATP from ADP in the presence of a proton gradient across the membrane. The alpha chain is a regulatory subunit. The sequence is that of ATP synthase subunit alpha from Rickettsia canadensis (strain McKiel).